The chain runs to 381 residues: Peptidoglycan glycosyltransferase MrdB (381 aa).

10 consecutive transmembrane segments (helical) span residues 11-31 (FDLL…LLIF), 40-60 (KQGV…FIPF), 66-86 (WLFA…FMGS), 102-122 (ITLQ…AHLI), 132-152 (YDWG…ALIL), 156-176 (DLGT…IVGL), 180-200 (VWLP…HFLH), 263-283 (FGFL…LHLF), 297-317 (IVAL…IAMT), and 328-348 (LPLF…FAIL).

It belongs to the SEDS family. MrdB/RodA subfamily.

It localises to the cell inner membrane. The enzyme catalyses [GlcNAc-(1-&gt;4)-Mur2Ac(oyl-L-Ala-gamma-D-Glu-L-Lys-D-Ala-D-Ala)](n)-di-trans,octa-cis-undecaprenyl diphosphate + beta-D-GlcNAc-(1-&gt;4)-Mur2Ac(oyl-L-Ala-gamma-D-Glu-L-Lys-D-Ala-D-Ala)-di-trans,octa-cis-undecaprenyl diphosphate = [GlcNAc-(1-&gt;4)-Mur2Ac(oyl-L-Ala-gamma-D-Glu-L-Lys-D-Ala-D-Ala)](n+1)-di-trans,octa-cis-undecaprenyl diphosphate + di-trans,octa-cis-undecaprenyl diphosphate + H(+). It participates in cell wall biogenesis; peptidoglycan biosynthesis. Functionally, peptidoglycan polymerase that is essential for cell wall elongation. The protein is Peptidoglycan glycosyltransferase MrdB of Helicobacter pylori (strain J99 / ATCC 700824) (Campylobacter pylori J99).